The sequence spans 139 residues: ATP synthase epsilon chain (139 aa).

The protein belongs to the ATPase epsilon chain family. As to quaternary structure, F-type ATPases have 2 components, CF(1) - the catalytic core - and CF(0) - the membrane proton channel. CF(1) has five subunits: alpha(3), beta(3), gamma(1), delta(1), epsilon(1). CF(0) has three main subunits: a, b and c.

The protein resides in the cell inner membrane. Produces ATP from ADP in the presence of a proton gradient across the membrane. The polypeptide is ATP synthase epsilon chain (Marinomonas sp. (strain MWYL1)).